We begin with the raw amino-acid sequence, 475 residues long: Nucleoporin-like protein amo1 (475 aa).

A C3H1-type zinc finger spans residues 1–25; it reads MVVCKYFLQNRCRYGTNCKNQHTVP. The span at 165–182 shows a compositional bias: polar residues; it reads DKSTSNSTVTSNQFNKPT. 2 disordered regions span residues 165-208 and 220-252; these read DKST…DIFG and NASP…SSFG. Low complexity predominate over residues 183 to 204; the sequence is QNSPFNSFSNNNNSFNNNQQAN. A compositionally biased stretch (polar residues) spans 220–242; it reads NASPFSQNTSSNSFTGSNPVQNN. Residues 243-252 are compositionally biased toward low complexity; sequence PSSFGSSSFG.

It localises to the nucleus. Functionally, involved in the cell polarity process where it is required for the correct termination of microtubule growth at the cell ends during interphase. This chain is Nucleoporin-like protein amo1 (amo1), found in Schizosaccharomyces pombe (strain 972 / ATCC 24843) (Fission yeast).